Consider the following 228-residue polypeptide: 2,3-bisphosphoglycerate-dependent phosphoglycerate mutase (228 aa).

Residues 8–15 (RHGQSEWN), 21–22 (TG), R60, 87–90 (ERHY), K98, 114–115 (RR), and 180–181 (GN) contribute to the substrate site. The active-site Tele-phosphohistidine intermediate is the H9. E87 (proton donor/acceptor) is an active-site residue.

It belongs to the phosphoglycerate mutase family. BPG-dependent PGAM subfamily. As to quaternary structure, homodimer.

The enzyme catalyses (2R)-2-phosphoglycerate = (2R)-3-phosphoglycerate. Its pathway is carbohydrate degradation; glycolysis; pyruvate from D-glyceraldehyde 3-phosphate: step 3/5. Catalyzes the interconversion of 2-phosphoglycerate and 3-phosphoglycerate. The sequence is that of 2,3-bisphosphoglycerate-dependent phosphoglycerate mutase from Zymomonas mobilis subsp. mobilis (strain ATCC 31821 / ZM4 / CP4).